The sequence spans 110 residues: Protein YcgL (110 aa).

Residues 14-98 (MFCVIYRSSK…PPEDLLKQHL (85 aa)) enclose the YcgL domain. Residues 87–110 (PPPPEDLLKQHLSSVGQNTSSADR) form a disordered region. Residues 97–110 (HLSSVGQNTSSADR) show a composition bias toward polar residues.

The polypeptide is Protein YcgL (Salmonella newport (strain SL254)).